The primary structure comprises 100 residues: Large ribosomal subunit protein bL21 (100 aa).

This sequence belongs to the bacterial ribosomal protein bL21 family. In terms of assembly, part of the 50S ribosomal subunit. Contacts protein L20.

Its function is as follows. This protein binds to 23S rRNA in the presence of protein L20. In Corynebacterium jeikeium (strain K411), this protein is Large ribosomal subunit protein bL21.